The primary structure comprises 168 residues: Protein OPG162 (168 aa).

The helical transmembrane segment at 15–37 threads the bilayer; that stretch reads LSVPAAIMMLLSTIISGIGTFLH. 2 cysteine pairs are disulfide-bonded: Cys-75–Cys-162 and Cys-141–Cys-154. A glycan (N-linked (GlcNAc...) asparagine; by host) is linked at Asn-133.

Belongs to the orthopoxvirus OPG162 protein family. As to quaternary structure, interacts with protein OPG161. Interacts with protein OPG164. Interacts with protein OPG190.

The protein localises to the virion membrane. It is found in the host Golgi apparatus. Functionally, forms a complex with OPG162 and OPG190 to coordinate the incorporation of OPG164 into wrapped enveloped virion (EV) membranes and, subsequently, the production of actin tails. Therefore plays an essential role in efficient cell-to-cell spread of viral particles. The polypeptide is Protein OPG162 (OPG162) (Monkeypox virus).